A 376-amino-acid chain; its full sequence is Multiphosphoryl transfer protein (376 aa).

Residues 2–142 enclose the PTS EIIA type-2 domain; sequence FQLSVQDIHP…EELRALLMGE (141 aa). Catalysis depends on histidine 62, which acts as the Tele-phosphohistidine intermediate; for EIIA activity. Histidine 62 is subject to Phosphohistidine; by HPr. The m domain stretch occupies residues 156–284; the sequence is TLDVIASSLV…LTSDDALTDD (129 aa). The region spanning 285 to 375 is the HPr domain; it reads VLSAEFVVRN…DAIAAGLGEG (91 aa). Catalysis depends on histidine 299, which acts as the Pros-phosphohistidine intermediate; for HPr activity. Position 299 is a phosphohistidine; by EI (histidine 299).

Its subcellular location is the cytoplasm. The phosphoenolpyruvate-dependent sugar phosphotransferase system (sugar PTS), a major carbohydrate active transport system, catalyzes the phosphorylation of incoming sugar substrates concomitantly with their translocation across the cell membrane. The enzyme II FruAB PTS system is involved in fructose transport. This Salmonella typhimurium (strain LT2 / SGSC1412 / ATCC 700720) protein is Multiphosphoryl transfer protein (fruB).